The sequence spans 187 residues: Ion-translocating oxidoreductase complex subunit B (187 aa).

A hydrophobic region spans residues 1–23 (MIAAAASMSALGLGLGYLLGAAA). Residues 29–88 (ETPPIVEEIAKILPGTNCGACGFPGCNGLAEAMAEGNAPVTACTPGGRDVALALAEIVTV) form the 4Fe-4S domain. Positions 46, 49, 54, 71, 112, 115, 118, 122, 142, 145, 148, and 152 each coordinate [4Fe-4S] cluster. 2 consecutive 4Fe-4S ferredoxin-type domains span residues 103 to 132 (MVAF…GGAK) and 133 to 162 (QIHT…SRVK).

It belongs to the 4Fe4S bacterial-type ferredoxin family. RnfB subfamily. As to quaternary structure, the complex is composed of six subunits: RnfA, RnfB, RnfC, RnfD, RnfE and RnfG. Requires [4Fe-4S] cluster as cofactor.

The protein localises to the cellular chromatophore membrane. Part of a membrane-bound complex that couples electron transfer with translocation of ions across the membrane. Required for nitrogen fixation. Involved in electron transfer to nitrogenase. The sequence is that of Ion-translocating oxidoreductase complex subunit B from Rhodobacter capsulatus (Rhodopseudomonas capsulata).